Here is a 176-residue protein sequence, read N- to C-terminus: Disulfide bond formation protein B (176 aa).

Topologically, residues 1 to 14 are cytoplasmic; sequence MLRFLNQCSQGRGA. The chain crosses the membrane as a helical span at residues 15–31; the sequence is WLLMAFTALALELTALW. The Periplasmic portion of the chain corresponds to 32–49; it reads FQHVMLLKPCVLCIYERC. An intrachain disulfide couples Cys-41 to Cys-44. The chain crosses the membrane as a helical span at residues 50–65; it reads ALFGVLGAALIGAIAP. The Cytoplasmic segment spans residues 66 to 71; sequence KTPLRY. A helical transmembrane segment spans residues 72–89; sequence VAMVIWLYSAFRGVQLTY. Residues 90–144 are Periplasmic-facing; it reads EHTMLQLYPSPFATCDFMARFPEWLPLDKWVPQVFVASGDCAERQWEFLGLEMPQ. An intrachain disulfide couples Cys-104 to Cys-130. Residues 145–163 traverse the membrane as a helical segment; that stretch reads WLLGIFIAYLIVAVLVVIS. The Cytoplasmic portion of the chain corresponds to 164–176; that stretch reads QPFKAKKRDLFGR.

Belongs to the DsbB family.

It localises to the cell inner membrane. In terms of biological role, required for disulfide bond formation in some periplasmic proteins. Acts by oxidizing the DsbA protein. The protein is Disulfide bond formation protein B of Escherichia coli O1:K1 / APEC.